The chain runs to 388 residues: Large ribosomal subunit protein uL3A (388 aa).

The segment covering 1–10 has biased composition (basic and acidic residues); it reads MSHCKFEQPR. The tract at residues 1-34 is disordered; it reads MSHCKFEQPRHGSLGFLPRKRASRQRGKVKAFPK. Serine 13 is modified (phosphoserine). Residues 18–31 show a composition bias toward basic residues; that stretch reads PRKRASRQRGKVKA. A phosphoserine mark is found at serine 65, serine 140, serine 143, serine 207, serine 295, and serine 355. Threonine 372 carries the phosphothreonine modification.

This sequence belongs to the universal ribosomal protein uL3 family. Component of the large ribosomal subunit (LSU). Mature yeast ribosomes consist of a small (40S) and a large (60S) subunit. The 40S small subunit contains 1 molecule of ribosomal RNA (18S rRNA) and at least 33 different proteins. The large 60S subunit contains 3 rRNA molecules (25S, 5.8S and 5S rRNA) and at least 46 different proteins. uL3 forms together with ES39L one of the contact sites for the signal recognition particle that targets ribosomes to the endoplasmic reticulum membrane.

It localises to the cytoplasm. Functionally, component of the ribosome, a large ribonucleoprotein complex responsible for the synthesis of proteins in the cell. The small ribosomal subunit (SSU) binds messenger RNAs (mRNAs) and translates the encoded message by selecting cognate aminoacyl-transfer RNA (tRNA) molecules. The large subunit (LSU) contains the ribosomal catalytic site termed the peptidyl transferase center (PTC), which catalyzes the formation of peptide bonds, thereby polymerizing the amino acids delivered by tRNAs into a polypeptide chain. The nascent polypeptides leave the ribosome through a tunnel in the LSU and interact with protein factors that function in enzymatic processing, targeting, and the membrane insertion of nascent chains at the exit of the ribosomal tunnel. uL3 plays a role in coordinating processes of accommodating the aminoacyl-tRNA in the PTC. The sequence is that of Large ribosomal subunit protein uL3A (rpl301) from Schizosaccharomyces pombe (strain 972 / ATCC 24843) (Fission yeast).